The chain runs to 354 residues: Uroporphyrinogen decarboxylase (354 aa).

Substrate-binding positions include 28-32 (RQAGR), D78, Y155, S210, and H325.

It belongs to the uroporphyrinogen decarboxylase family. As to quaternary structure, homodimer.

The protein resides in the cytoplasm. It carries out the reaction uroporphyrinogen III + 4 H(+) = coproporphyrinogen III + 4 CO2. Its pathway is porphyrin-containing compound metabolism; protoporphyrin-IX biosynthesis; coproporphyrinogen-III from 5-aminolevulinate: step 4/4. Its function is as follows. Catalyzes the decarboxylation of four acetate groups of uroporphyrinogen-III to yield coproporphyrinogen-III. The sequence is that of Uroporphyrinogen decarboxylase from Crocosphaera subtropica (strain ATCC 51142 / BH68) (Cyanothece sp. (strain ATCC 51142)).